Reading from the N-terminus, the 548-residue chain is Probable malate:quinone oxidoreductase (548 aa).

Residues 521-548 (DKPQAADSTPKPQLKPQPVQKEVADIAL) are disordered. Low complexity predominate over residues 530-541 (PKPQLKPQPVQK).

It belongs to the MQO family. FAD is required as a cofactor.

The enzyme catalyses (S)-malate + a quinone = a quinol + oxaloacetate. It participates in carbohydrate metabolism; tricarboxylic acid cycle; oxaloacetate from (S)-malate (quinone route): step 1/1. This is Probable malate:quinone oxidoreductase from Shigella boydii serotype 4 (strain Sb227).